The chain runs to 95 residues: Small ribosomal subunit protein bS6 (95 aa).

The protein belongs to the bacterial ribosomal protein bS6 family.

Functionally, binds together with bS18 to 16S ribosomal RNA. The chain is Small ribosomal subunit protein bS6 from Corynebacterium urealyticum (strain ATCC 43042 / DSM 7109).